An 867-amino-acid chain; its full sequence is FO synthase (867 aa).

The segment at 1–22 (MTTSATSGTGPADPAGPTENSM) is disordered. 2 Radical SAM core domains span residues 75–325 (ITYS…LQAP) and 534–769 (VTYI…LLHP). The segment at 76-407 (TYSKSVFVPL…PRLRPHVAAL (332 aa)) is cofG-like. C89, C93, C96, C548, C552, and C555 together coordinate [4Fe-4S] cluster. The cofH-like stretch occupies residues 511 to 844 (EGPALDALCG…KPRTTLYGPV (334 aa)). The tract at residues 835-867 (KPRTTLYGPVPEERQRAARDSDGHLPELLPVLD) is disordered. A compositionally biased stretch (basic and acidic residues) spans 845 to 859 (PEERQRAARDSDGHL).

The protein in the N-terminal section; belongs to the radical SAM superfamily. CofG family. This sequence in the C-terminal section; belongs to the radical SAM superfamily. CofH family. [4Fe-4S] cluster is required as a cofactor.

The catalysed reaction is 5-amino-6-(D-ribitylamino)uracil + L-tyrosine + S-adenosyl-L-methionine = 5-amino-5-(4-hydroxybenzyl)-6-(D-ribitylimino)-5,6-dihydrouracil + 2-iminoacetate + 5'-deoxyadenosine + L-methionine + H(+). The enzyme catalyses 5-amino-5-(4-hydroxybenzyl)-6-(D-ribitylimino)-5,6-dihydrouracil + S-adenosyl-L-methionine = 7,8-didemethyl-8-hydroxy-5-deazariboflavin + 5'-deoxyadenosine + L-methionine + NH4(+) + H(+). The protein operates within cofactor biosynthesis; coenzyme F0 biosynthesis. Functionally, catalyzes the radical-mediated synthesis of 7,8-didemethyl-8-hydroxy-5-deazariboflavin (FO) from 5-amino-6-(D-ribitylamino)uracil and L-tyrosine. The sequence is that of FO synthase (fbiC) from Streptomyces coelicolor (strain ATCC BAA-471 / A3(2) / M145).